Reading from the N-terminus, the 504-residue chain is MNPYDAKDRRWILSMFFFVVLFCNNVSTSSSSSEVITIKPRHLSLLKSALQRSSGEQSDLWRPLTDQGWSPCIDLGNSPSLPDKTAGYVQVFLDGGLNQQRMGICDAVAVAKILNATLVIPYLEVNPVWQDSSSFVDIFDVDHFIDSLKDDIRVVRELPDEYSWSTREYYGTAVRETRVKTAPVHASANWYIENVSPVLQSYGIAAISPFSHRLSFDHLPAEIQRLRCKVNFQALRFVPHITSLGDALVSRLRNPSWRSNKEQKNVDHLGDMTNPHRRQEPGKFAVLHLRFDKDMAAHSACDFGGGKAEKLSLAKYRQMIWQGRVLNSQFTDEELRSQGRCPLTPEEMGLLLAAFGFDNNTRLYLASHKVYGGEARISTLRQVFPRMEDKRSLASSEERARIKGKASLLAALDYYVSMHSDIFISASPGNMHNALVGHRTFENLKTIRPNMALIGQLFLNKSITWVDFQQALGEGHVNRQGQIRLRKPKQSIYTYPAPDCMCHV.

A helical; Signal-anchor for type II membrane protein membrane pass occupies residues 11 to 27; it reads WILSMFFFVVLFCNNVS. Residue N115 is glycosylated (N-linked (GlcNAc...) asparagine). Residue 288-290 coordinates substrate; the sequence is HLR. N-linked (GlcNAc...) asparagine glycosylation is found at N359 and N460.

This sequence belongs to the glycosyltransferase GT106 family.

The protein localises to the membrane. The protein operates within glycan metabolism. In Arabidopsis thaliana (Mouse-ear cress), this protein is O-fucosyltransferase 39.